The chain runs to 475 residues: Argininosuccinate lyase (475 aa).

This sequence belongs to the lyase 1 family. Argininosuccinate lyase subfamily.

The protein resides in the cytoplasm. It carries out the reaction 2-(N(omega)-L-arginino)succinate = fumarate + L-arginine. It functions in the pathway amino-acid biosynthesis; L-arginine biosynthesis; L-arginine from L-ornithine and carbamoyl phosphate: step 3/3. In Streptomyces coelicolor (strain ATCC BAA-471 / A3(2) / M145), this protein is Argininosuccinate lyase.